Reading from the N-terminus, the 704-residue chain is MPNLLLELRSEEIPARMQRKAAGDLKKLVTDALVEAGLSYEGAREYWTPRRLALDIHGLTARSADVREERKGPRTDANEKAIEGFLRGAGLSSVSEAQVVSDPKKGDFYVAVISKPGRATEEIVTDVMPGIIRDFPWPKSMRWGKASSKPGALRWVRPLQSIVCTFGPEHEETTVIPFEIDGITASNITYGHRFHAPEPITVRRFDDYAANLEKAKVILDAERRKDIILHDARDIAFANGLELVEDEGLLEEVSGLVEWPQVLMGSFEEDYLSIPSEIIRLTIKTNQKCFVTRPQGGETLSNKFILVSNIQASDGGKEIVHGNGKVVRARLSDALHFWKRDQGNLPDLETLTASAAKFGLDINKPLDQRMAKLDALDVTFHAKLGTQGARVARIRTLAKQLADITGADAALIDRAAVLAKADLRTEAVGEFPELQGLMGRKYAALQGEDASVAAALEDHYKPQGPSDRVPEDRVAITIALADKLDTLIGFWAIDEKPTGSKDPFALRRAALGVVRILLERKVRLPLLTTTRDIDLLSFFHDRLKVYLRDQGARHDLIDAVLTPDADDLLMVARRVEALTAFITSEDGKNLLAGTKRATQLLAAEEKKGTVIADGVSQALLKLDAEKELFAAISGASKDASDAVAGEDFRSAMEALSKLRGPVDRFFEDVLVNDEDAAIRANRLALLRLIREATGTVADFSKISG.

The protein belongs to the class-II aminoacyl-tRNA synthetase family. Tetramer of two alpha and two beta subunits.

It is found in the cytoplasm. It catalyses the reaction tRNA(Gly) + glycine + ATP = glycyl-tRNA(Gly) + AMP + diphosphate. The polypeptide is Glycine--tRNA ligase beta subunit (Rhizobium johnstonii (strain DSM 114642 / LMG 32736 / 3841) (Rhizobium leguminosarum bv. viciae)).